The primary structure comprises 557 residues: Formate--tetrahydrofolate ligase (557 aa).

Residue threonine 67–threonine 74 participates in ATP binding.

Belongs to the formate--tetrahydrofolate ligase family.

The enzyme catalyses (6S)-5,6,7,8-tetrahydrofolate + formate + ATP = (6R)-10-formyltetrahydrofolate + ADP + phosphate. It participates in one-carbon metabolism; tetrahydrofolate interconversion. This Cereibacter sphaeroides (strain ATCC 17025 / ATH 2.4.3) (Rhodobacter sphaeroides) protein is Formate--tetrahydrofolate ligase.